The primary structure comprises 274 residues: MTQQLQTLIDNAWDNRASLSPSAAPKEVVDAVEHVIAELNNGRLRVATREGVGQWTVHQWIKKAVLLSFRLKDNELMKAGDLGFFDKVPTKFAHLSADEMAATGVRVVPPAVARRGSFIAKGAILMPSYVNIGAYVDEGTMVDTWATVGSCAQVGKNVHLSGGVGLGGVLEPLQANPTIIEDNCFIGARSEVVEGVIVEENSVISMGVYIGQSTPIYDRTTGETTYGRVPAGSVVVSGNLPKDGGRYSMYAAIIVKKVDAKTRSTTSLNDLLRD.

The substrate site is built by arginine 106 and aspartate 143.

The protein belongs to the transferase hexapeptide repeat family. In terms of assembly, homotrimer.

The protein localises to the cytoplasm. The enzyme catalyses (S)-2,3,4,5-tetrahydrodipicolinate + succinyl-CoA + H2O = (S)-2-succinylamino-6-oxoheptanedioate + CoA. It functions in the pathway amino-acid biosynthesis; L-lysine biosynthesis via DAP pathway; LL-2,6-diaminopimelate from (S)-tetrahydrodipicolinate (succinylase route): step 1/3. This is 2,3,4,5-tetrahydropyridine-2,6-dicarboxylate N-succinyltransferase from Acidovorax ebreus (strain TPSY) (Diaphorobacter sp. (strain TPSY)).